The primary structure comprises 258 residues: Chymotrypsin-like elastase family member 1 (258 aa).

The first 8 residues, 1-8, serve as a signal peptide directing secretion; sequence MLVLYGHS. Positions 9–18 are cleaved as a propeptide — activation peptide; it reads TQDLPETNAR. Residues 19–256 enclose the Peptidase S1 domain; that stretch reads VVGGTEAGRN…YISWINNVIA (238 aa). The cysteines at positions 48 and 64 are disulfide-linked. Residue H63 is the Charge relay system of the active site. 4 residues coordinate Ca(2+): D77, N79, Q82, and E87. The N-linked (GlcNAc...) asparagine glycan is linked to N79. D111 acts as the Charge relay system in catalysis. Cystine bridges form between C145/C212, C176/C192, and C202/C232. Residue S206 is the Charge relay system of the active site. N233 is a glycosylation site (N-linked (GlcNAc...) asparagine).

Belongs to the peptidase S1 family. Elastase subfamily. The cofactor is Ca(2+). As to expression, basal layers of epidermis (at protein level). Not expressed in the pancreas.

Its subcellular location is the secreted. It carries out the reaction Hydrolysis of proteins, including elastin. Preferential cleavage: Ala-|-Xaa.. In terms of biological role, serine proteases that hydrolyze many proteins in addition to elastin. This chain is Chymotrypsin-like elastase family member 1 (CELA1), found in Homo sapiens (Human).